Reading from the N-terminus, the 239-residue chain is uncharacterized protein (239 aa).

This is an uncharacterized protein from Edwardsiella ictaluri (strain 93-146).